The sequence spans 201 residues: dCTP deaminase, dUMP-forming (201 aa).

Residues 101–106 (KSSLGR), D119, 127–129 (TLE), Q148, Y162, and Q174 contribute to the dCTP site. Catalysis depends on E129, which acts as the Proton donor/acceptor.

This sequence belongs to the dCTP deaminase family. Homotrimer.

It carries out the reaction dCTP + 2 H2O = dUMP + NH4(+) + diphosphate. The protein operates within pyrimidine metabolism; dUMP biosynthesis; dUMP from dCTP: step 1/1. Its function is as follows. Bifunctional enzyme that catalyzes both the deamination of dCTP to dUTP and the hydrolysis of dUTP to dUMP without releasing the toxic dUTP intermediate. In Clavibacter michiganensis subsp. michiganensis (strain NCPPB 382), this protein is dCTP deaminase, dUMP-forming.